Consider the following 517-residue polypeptide: Lysophosphatidylcholine acyltransferase 2B (517 aa).

N-linked (GlcNAc...) asparagine glycosylation occurs at Asn-29. Transmembrane regions (helical) follow at residues 70 to 90, 103 to 123, and 137 to 157; these read IVFLFLLLWPVALLSTINLPI, LIKPVFIFLLRLAFFCAGFLI, and IFVVAPHSTFFDAIAVIVAGL. The short motif at 143–148 is the HXXXXD motif element; it reads HSTFFD. EF-hand domains are found at residues 388-423 and 425-460; these read PISEPLRQLFSLFDRNQDGTIDFREYVIGLTVLCNP and NTEKILQMSFKLFDLDEDGYITEQELTTMLRAAFGV. Ca(2+) contacts are provided by Asp-401, Asn-403, Asp-405, Thr-407, Glu-412, Asp-438, Asp-440, Asp-442, Tyr-444, and Glu-449.

It belongs to the 1-acyl-sn-glycerol-3-phosphate acyltransferase family.

Its subcellular location is the membrane. It functions in the pathway lipid metabolism; phospholipid metabolism. Its function is as follows. Probable acetyltransferase. The protein is Lysophosphatidylcholine acyltransferase 2B (Lpcat2b) of Rattus norvegicus (Rat).